The following is a 532-amino-acid chain: Eukaryotic translation initiation factor 4B1 (532 aa).

Disordered regions lie at residues 16–365 (EAER…LEEQ), 401–434 (KKLEKESVAPEIKESDQEPGSNNNHNDLPEIIRG), and 451–532 (RFRQ…REGW). A compositionally biased stretch (low complexity) spans 26 to 35 (AEATAATADT). Composition is skewed to gly residues over residues 105–120 (RLGGGFSSYGGRSGGR) and 132–147 (WSGGGGGGGRRPYGGG). The span at 167-180 (RADEVDDWGKEKKP) shows a compositional bias: basic and acidic residues. Residues 177 to 184 (EKKPLPSF) carry the Nuclear localization signal 1 motif. Over residues 193-217 (SGDGGGFGGGGSGFGGGGGGGGGGL) the composition is skewed to gly residues. Positions 237–244 (SSTFGSSF) match the Nuclear localization signal 2 motif. A compositionally biased stretch (low complexity) spans 237-247 (SSTFGSSFGDS). Composition is skewed to basic and acidic residues over residues 249–263 (QEERRRLVLEPRKVE) and 286–310 (RPREDVLAEKGLDWKKIDSEIEAKK). The span at 315-337 (TSRPTSAHSSRPSSAQSNRSESS) shows a compositional bias: low complexity. 4 stretches are compositionally biased toward basic and acidic residues: residues 355–365 (AKPREVLLEEQ), 401–416 (KKLEKESVAPEIKESD), 472–494 (ERTHSRAGSIDETRSFESTERPR), and 507–520 (NEQRRNFQGTKERG).

It belongs to the eIF-4 subunit B family. In terms of assembly, homodimer. Nonspherical monomer. mRNA-discriminating component of initiation complexes. Phosphorylated.

The protein localises to the nucleus. Promotes the eIF4F and eIF4A RNA-dependent ATP-hydrolysis activity with different efficiency depending on mRNAs, thus providing mRNA discrimination during initiation of translation. This chain is Eukaryotic translation initiation factor 4B1, found in Arabidopsis thaliana (Mouse-ear cress).